Here is a 106-residue protein sequence, read N- to C-terminus: MASSGAGDPLDSKRGEAPFAQRIDPTREKLTPEQLHSMRQAELAQWQKVLPRRRTRNIVTGLGIGALVLAIYGYTFYSISQERFLDELEDEAKAARARALARASGS.

Residues 1-34 (MASSGAGDPLDSKRGEAPFAQRIDPTREKLTPEQ) form a disordered region. A2 carries the N-acetylalanine modification. Residues 2 to 57 (ASSGAGDPLDSKRGEAPFAQRIDPTREKLTPEQLHSMRQAELAQWQKVLPRRRTRN) lie on the Mitochondrial matrix side of the membrane. The chain crosses the membrane as a helical span at residues 58–78 (IVTGLGIGALVLAIYGYTFYS). A coiled-coil region spans residues 78–104 (SISQERFLDELEDEAKAARARALARAS). The Mitochondrial intermembrane portion of the chain corresponds to 79–106 (ISQERFLDELEDEAKAARARALARASGS).

The protein belongs to the COA3 family. Along with COX14, core component of the MITRAC (mitochondrial translation regulation assembly intermediate of cytochrome c oxidase complex) complex. Interacts with MT-CO1/COX1, SMIM20, SURF1 and TIMM21.

It localises to the mitochondrion inner membrane. Its function is as follows. Core component of the MITRAC (mitochondrial translation regulation assembly intermediate of cytochrome c oxidase complex) complex, that regulates cytochrome c oxidase assembly. MITRAC complexes regulate both translation of mitochondrial encoded components and assembly of nuclear-encoded components imported in mitochondrion. Required for efficient translation of MT-CO1 and mitochondrial respiratory chain complex IV assembly. In Homo sapiens (Human), this protein is Cytochrome c oxidase assembly factor 3 homolog, mitochondrial (COA3).